Consider the following 253-residue polypeptide: Indole-3-glycerol phosphate synthase (253 aa).

Belongs to the TrpC family.

The catalysed reaction is 1-(2-carboxyphenylamino)-1-deoxy-D-ribulose 5-phosphate + H(+) = (1S,2R)-1-C-(indol-3-yl)glycerol 3-phosphate + CO2 + H2O. Its pathway is amino-acid biosynthesis; L-tryptophan biosynthesis; L-tryptophan from chorismate: step 4/5. The chain is Indole-3-glycerol phosphate synthase from Bacillus mycoides (strain KBAB4) (Bacillus weihenstephanensis).